Consider the following 454-residue polypeptide: Aminodeoxychorismate synthase component 1 (454 aa).

L-tryptophan-binding positions include serine 37, 44-47 (YNRF), and 241-243 (PFS). The active-site Proton donor is glutamate 259. The active-site N6-(4-deoxychorismate)-lysine intermediate is lysine 275.

Belongs to the anthranilate synthase component I family. Monomer. Heterodimer consisting of two non-identical subunits: a glutamine amidotransferase subunit (PabA) and a aminodeoxychorismate synthase subunit (PabB). Requires Mg(2+) as cofactor.

It carries out the reaction chorismate + L-glutamine = 4-amino-4-deoxychorismate + L-glutamate. Its pathway is cofactor biosynthesis; tetrahydrofolate biosynthesis; 4-aminobenzoate from chorismate: step 1/2. Functionally, part of a heterodimeric complex that catalyzes the two-step biosynthesis of 4-amino-4-deoxychorismate (ADC), a precursor of p-aminobenzoate (PABA) and tetrahydrofolate. In the first step, a glutamine amidotransferase (PabA) generates ammonia as a substrate that, along with chorismate, is used in the second step, catalyzed by aminodeoxychorismate synthase (PabB) to produce ADC. The sequence is that of Aminodeoxychorismate synthase component 1 (pabB) from Salmonella typhimurium (strain LT2 / SGSC1412 / ATCC 700720).